The primary structure comprises 131 residues: Histone H2B.2 (131 aa).

A compositionally biased stretch (basic and acidic residues) spans 1 to 19 (MSSAAEKKPASKAPAEKKP). Positions 1 to 37 (MSSAAEKKPASKAPAEKKPAAKKTSTSVDGKKRSKVR) are disordered. Residues lysine 7 and lysine 8 each carry the N6-acetyllysine; alternate modification. Glycyl lysine isopeptide (Lys-Gly) (interchain with G-Cter in SUMO); alternate cross-links involve residues lysine 7 and lysine 8. Phosphoserine is present on serine 11. Lysine 12 is modified (N6-acetyllysine). An N6-acetyllysine; alternate mark is found at lysine 17, lysine 18, lysine 22, and lysine 23. Residues lysine 17 and lysine 18 each participate in a glycyl lysine isopeptide (Lys-Gly) (interchain with G-Cter in SUMO); alternate cross-link. The residue at position 22 (lysine 22) is an N6-butyryllysine; alternate. Lysine 23 bears the N6-methyllysine; alternate mark. Residue lysine 35 is modified to N6-succinyllysine. An N6,N6-dimethyllysine modification is found at lysine 38. Lysine 47 is modified (N6-succinyllysine). A Glycyl lysine isopeptide (Lys-Gly) (interchain with G-Cter in ubiquitin) cross-link involves residue lysine 124.

Belongs to the histone H2B family. As to quaternary structure, the nucleosome is a histone octamer containing two molecules each of H2A, H2B, H3 and H4 assembled in one H3-H4 heterotetramer and two H2A-H2B heterodimers. The octamer wraps approximately 147 bp of DNA. Interacts with NAP1. Post-translationally, monoubiquitinated by the RAD6/UBC2-BRE1 complex to form H2BK123ub1. H2BK123ub1 gives a specific tag for epigenetic transcriptional activation and is also prerequisite for H3K4me and H3K79me formation. H2BK123ub1 also modulates the formation of double-strand breaks during meiosis and is a prerequisite for DNA-damage checkpoint activation. Deubiquitination is performed by UBP8 in presence of SGF11. In terms of processing, phosphorylated by STE20 to form H2BS10ph during progression through meiotic prophase. May be correlated with chromosome condensation. H2BS10ph is also formed after H(2)O(2) treatment, and is a step leading to apoptosis. Acetylated by GCN5, a component of the SAGA complex, to form H2BK11ac and H2BK16ac. H2BK16ac can also be formed by ESA1, a component of the NuA4 histone acetyltransferase (HAT) complex. Acetylation of N-terminal lysines and particularly formation of H2BK11acK16ac has a positive effect on transcription. Post-translationally, sumoylation to form H2BK6su or H2BK7su, and probably also H2BK16su or H2BK17su, occurs preferentially near the telomeres and represses gene transcription.

The protein resides in the nucleus. It localises to the chromosome. Its function is as follows. Core component of nucleosome. Nucleosomes wrap and compact DNA into chromatin, limiting DNA accessibility to the cellular machineries which require DNA as a template. Histones thereby play a central role in transcription regulation, DNA repair, DNA replication and chromosomal stability. DNA accessibility is regulated via a complex set of post-translational modifications of histones, also called histone code, and nucleosome remodeling. This chain is Histone H2B.2 (HTB2), found in Saccharomyces cerevisiae (strain ATCC 204508 / S288c) (Baker's yeast).